A 218-amino-acid polypeptide reads, in one-letter code: MGAYRAEDDYDYLFKVVLTGDSGVGKSNLLSRFTRNDFSHDSRATIGVEFATRSIQCDDKIVKAQIWDTAGQERYRAITSAYYRGAVGALLVYDVTRHVTFENVERWLKELRDHTDANIVIMLVGNKADLRHLRAISTEEAKAFAERENTFFMETSALEAVNVDNAFTEVLTQIYRVVSKKALEAGDDPTTALPKGQMINVGGRDDISAVKKPGCCSA.

Position 20–27 (20–27) interacts with GTP; it reads GDSGVGKS. Positions 42–50 match the Effector region motif; it reads SRATIGVEF. Residues 68-72, 126-129, and 156-157 each bind GTP; these read DTAGQ, NKAD, and SA. Residues cysteine 215 and cysteine 216 are each lipidated (S-geranylgeranyl cysteine).

This sequence belongs to the small GTPase superfamily. Rab family.

It is found in the cell membrane. Its function is as follows. Intracellular vesicle trafficking and protein transport. The chain is Ras-related protein RABA1i (RABA1I) from Arabidopsis thaliana (Mouse-ear cress).